A 274-amino-acid chain; its full sequence is Diaminopimelate epimerase (274 aa).

Asn11, Gln44, and Asn64 together coordinate substrate. The Proton donor role is filled by Cys73. Substrate contacts are provided by residues 74–75 (GN), Asn157, Asn190, and 208–209 (ER). The active-site Proton acceptor is the Cys217. Position 218–219 (218–219 (GS)) interacts with substrate.

This sequence belongs to the diaminopimelate epimerase family. In terms of assembly, homodimer.

Its subcellular location is the cytoplasm. The catalysed reaction is (2S,6S)-2,6-diaminopimelate = meso-2,6-diaminopimelate. The protein operates within amino-acid biosynthesis; L-lysine biosynthesis via DAP pathway; DL-2,6-diaminopimelate from LL-2,6-diaminopimelate: step 1/1. Catalyzes the stereoinversion of LL-2,6-diaminopimelate (L,L-DAP) to meso-diaminopimelate (meso-DAP), a precursor of L-lysine and an essential component of the bacterial peptidoglycan. The polypeptide is Diaminopimelate epimerase (Haemophilus ducreyi (strain 35000HP / ATCC 700724)).